A 413-amino-acid polypeptide reads, in one-letter code: Tryptophan synthase beta chain 2 (413 aa).

Lys107 is modified (N6-(pyridoxal phosphate)lysine).

It belongs to the TrpB family. As to quaternary structure, tetramer of two alpha and two beta chains. It depends on pyridoxal 5'-phosphate as a cofactor.

It carries out the reaction (1S,2R)-1-C-(indol-3-yl)glycerol 3-phosphate + L-serine = D-glyceraldehyde 3-phosphate + L-tryptophan + H2O. It participates in amino-acid biosynthesis; L-tryptophan biosynthesis; L-tryptophan from chorismate: step 5/5. Functionally, the beta subunit is responsible for the synthesis of L-tryptophan from indole and L-serine. This chain is Tryptophan synthase beta chain 2 (trpB2), found in Nostoc sp. (strain PCC 7120 / SAG 25.82 / UTEX 2576).